Consider the following 449-residue polypeptide: Heterogeneous nuclear ribonucleoprotein H (449 aa).

Met1 is modified (N-acetylmethionine; in Heterogeneous nuclear ribonucleoprotein H; alternate). At Met2 the chain carries N-acetylmethionine; in Heterogeneous nuclear ribonucleoprotein H, N-terminally processed. Residues 11–90 (FVVKVRGLPW…RYVEVFKSNN (80 aa)) form the RRM 1 domain. Ser23 bears the Phosphoserine mark. Lys35 participates in a covalent cross-link: Glycyl lysine isopeptide (Lys-Gly) (interchain with G-Cter in SUMO2). A phosphoserine mark is found at Ser54 and Ser63. Residues Lys87 and Lys98 each participate in a glycyl lysine isopeptide (Lys-Gly) (interchain with G-Cter in SUMO2) cross-link. The 78-residue stretch at 111-188 (GFVRLRGLPF…RYIEIFKSSR (78 aa)) folds into the RRM 2 domain. Dimethylated arginine; alternate is present on Arg233. Arg233 bears the Omega-N-methylarginine; alternate mark. A 1-1 repeat occupies 234–249 (GAYGGGYGGYDDYNGY). The interval 234-433 (GAYGGGYGGY…YGGQSSMSGY (200 aa)) is 2 X 16 AA Gly-rich approximate repeats. Phosphotyrosine is present on Tyr246. The 76-residue stretch at 289–364 (HCVHMRGLPY…RYVELFLNST (76 aa)) folds into the RRM 3 domain. Ser310 bears the Phosphoserine mark. Repeat copies occupy residues 354-372 (HRYVELFLNSTAGASGGAY), 374-392 (HRYVELFLNSTAGASGGAY), and 418-433 (GGYGGGYGGQSSMSGY). The 2 X 19 AA perfect repeats stretch occupies residues 354-392 (HRYVELFLNSTAGASGGAYEHRYVELFLNSTAGASGGAY).

As to quaternary structure, part of a ternary complex containing FUBP2, PTBP1, PTBP2 and HNRNPH1. Identified in the spliceosome C complex. Interacts with IGF2BP1. Interacts with CUGBP1; the interaction is RNA-dependent. Interacts with MBNL1; the interaction in RNA-independent. Expressed ubiquitously.

The protein localises to the nucleus. Its subcellular location is the nucleoplasm. Its function is as follows. This protein is a component of the heterogeneous nuclear ribonucleoprotein (hnRNP) complexes which provide the substrate for the processing events that pre-mRNAs undergo before becoming functional, translatable mRNAs in the cytoplasm. Mediates pre-mRNA alternative splicing regulation. Inhibits, together with CUGBP1, insulin receptor (IR) pre-mRNA exon 11 inclusion in myoblast. Binds to the IR RNA. Binds poly(RG). This Homo sapiens (Human) protein is Heterogeneous nuclear ribonucleoprotein H (HNRNPH1).